We begin with the raw amino-acid sequence, 430 residues long: Enolase (430 aa).

Glutamine 167 is a binding site for (2R)-2-phosphoglycerate. Glutamate 209 serves as the catalytic Proton donor. Aspartate 246, glutamate 287, and aspartate 314 together coordinate Mg(2+). (2R)-2-phosphoglycerate contacts are provided by lysine 339, arginine 368, serine 369, and lysine 390. Lysine 339 serves as the catalytic Proton acceptor.

Belongs to the enolase family. The cofactor is Mg(2+).

It localises to the cytoplasm. The protein resides in the secreted. It is found in the cell surface. The enzyme catalyses (2R)-2-phosphoglycerate = phosphoenolpyruvate + H2O. It functions in the pathway carbohydrate degradation; glycolysis; pyruvate from D-glyceraldehyde 3-phosphate: step 4/5. Catalyzes the reversible conversion of 2-phosphoglycerate (2-PG) into phosphoenolpyruvate (PEP). It is essential for the degradation of carbohydrates via glycolysis. The polypeptide is Enolase (Prochlorococcus marinus (strain MIT 9301)).